The following is a 324-amino-acid chain: AT-hook motif nuclear-localized protein 24 (324 aa).

Residues 1 to 12 (MDPVQSHGSQSS) show a composition bias toward polar residues. Disordered stretches follow at residues 1–122 (MDPV…KPPI) and 262–324 (MQTP…RPPY). The span at 24 to 33 (LHLQQQQQEF) shows a compositional bias: low complexity. The span at 69-79 (NIDNIANNSGS) shows a compositional bias: polar residues. Gly residues predominate over residues 88 to 99 (GGSGEGGGGSGG). The a.T hook DNA-binding region spans 105 to 117 (RRPRGRPAGSKNK). A PPC domain is found at 129-268 (ANALRTHVME…EDEMQTPVHG (140 aa)). Over residues 280–297 (MMGQQLQHQQQAMSGHQG) the composition is skewed to low complexity. Residues 304 to 318 (GSVQLQQQHDQSYWS) are compositionally biased toward polar residues.

It localises to the nucleus. Transcription factor that specifically binds AT-rich DNA sequences related to the nuclear matrix attachment regions (MARs). This Arabidopsis thaliana (Mouse-ear cress) protein is AT-hook motif nuclear-localized protein 24.